A 397-amino-acid polypeptide reads, in one-letter code: Phosphoglycerate kinase (397 aa).

Substrate contacts are provided by residues 21–23 (DFN), Arg37, 60–63 (HLGR), Arg119, and Arg152. Residues Lys203, Gly294, Glu325, and 354–357 (GGDS) each bind ATP.

It belongs to the phosphoglycerate kinase family. In terms of assembly, monomer.

Its subcellular location is the cytoplasm. The catalysed reaction is (2R)-3-phosphoglycerate + ATP = (2R)-3-phospho-glyceroyl phosphate + ADP. It functions in the pathway carbohydrate degradation; glycolysis; pyruvate from D-glyceraldehyde 3-phosphate: step 2/5. The protein is Phosphoglycerate kinase of Prosthecochloris aestuarii (strain DSM 271 / SK 413).